A 547-amino-acid chain; its full sequence is RNA polymerase sigma factor sigF, chloroplastic (547 aa).

Over residues 1–17 the composition is skewed to polar residues; it reads MEATRNLVSSSPSFQTK. 2 disordered regions span residues 1–28 and 54–79; these read MEAT…SSPS and FPAS…DDRT. The N-terminal 55 residues, 1 to 55, are a transit peptide targeting the chloroplast; that stretch reads MEATRNLVSSSPSFQTKTHLKSSYSSPSSVVMLHDQTTTPVVNSRHLNSLSRHFP. A compositionally biased stretch (basic and acidic residues) spans 62–79; it reads EPREESRPLSHALRDDRT. Ser-94, Ser-95, Ser-174, Ser-176, Ser-177, and Ser-180 each carry phosphoserine; by CK2. Residues 163–226 form a disordered region; sequence ANPSDNIKDS…QKTSAKKKYK (64 aa). A compositionally biased stretch (low complexity) spans 172–181; sequence SLSTSSSMSL. Thr-249 carries the post-translational modification Phosphothreonine; by CK2. The short motif at 335–348 is the Polymerase core binding element; sequence DLLQEGSMGLMKSV. The H-T-H motif DNA-binding region spans 505-524; the sequence is LSEIGEIYGLSKERVRQLES.

The protein belongs to the sigma-70 factor family. In terms of assembly, interacts (via N-terminus) with DG1 (via C-terminus). In terms of processing, phosphorylated to acquire sigma activity; site-specific phosphorylation regulates promoter affinity. Phosphorylation at Ser-174 by chloroplastic CK2 requires prior phosphorylation at Ser-177. Phosphorylation at either Ser-94, Ser-95 or Ser-174 is required for sigma activation. Expressed in seedling, accumulating progressively. Present in leaves but not in roots.

The protein resides in the plastid. Its subcellular location is the chloroplast. Sigma factors are initiation factors that promote the attachment of plastid-encoded RNA polymerase (PEP) to specific initiation sites and are then released. Regulates transcription in chloroplast in a DG1-dependent manner. Involved in light-dependent chloroplast development. Required during early plant development and primary leaf formation. The polypeptide is RNA polymerase sigma factor sigF, chloroplastic (SIGF) (Arabidopsis thaliana (Mouse-ear cress)).